We begin with the raw amino-acid sequence, 359 residues long: NADH-quinone oxidoreductase subunit H (359 aa).

A run of 8 helical transmembrane segments spans residues 19–39 (IGWF…FIAL), 94–114 (FLFV…FAVL), 127–147 (VGLF…LAAG), 166–186 (IVSY…LAGT), 202–222 (FMHW…IYFI), 266–286 (MFMV…SPLP), 301–321 (VWGA…QMWL), and 337–357 (CWKV…IWVI).

Belongs to the complex I subunit 1 family. As to quaternary structure, NDH-1 is composed of 14 different subunits. Subunits NuoA, H, J, K, L, M, N constitute the membrane sector of the complex.

It is found in the cell inner membrane. The enzyme catalyses a quinone + NADH + 5 H(+)(in) = a quinol + NAD(+) + 4 H(+)(out). In terms of biological role, NDH-1 shuttles electrons from NADH, via FMN and iron-sulfur (Fe-S) centers, to quinones in the respiratory chain. The immediate electron acceptor for the enzyme in this species is believed to be ubiquinone. Couples the redox reaction to proton translocation (for every two electrons transferred, four hydrogen ions are translocated across the cytoplasmic membrane), and thus conserves the redox energy in a proton gradient. This subunit may bind ubiquinone. The protein is NADH-quinone oxidoreductase subunit H of Chlorobaculum parvum (strain DSM 263 / NCIMB 8327) (Chlorobium vibrioforme subsp. thiosulfatophilum).